The following is a 493-amino-acid chain: Na(+)/H(+) antiporter subunit D (493 aa).

The next 14 membrane-spanning stretches (helical) occupy residues 4–23 (LVILPILIPFIVGSFLILFA), 30–52 (RVISGFAVVGMLLVSIYLAVDVY), 72–94 (LVADLFATMMVILASIVGVVCLF), 107–126 (YYFYPFYFFLLAGVNGAFLT), 130–149 (FNLFVFFEVMLIASYILIVL), 162–184 (YVVINVFASILFIVGVAYIYSIT), 204–226 (VLNVIAVIFLVVFAMKGGLFPLY), 233–255 (YFGPPAAIAALFGGLLTKVGIYA), 270–292 (FTHTLILILAGLTMFFGVLGAVS), 299–321 (ILSYHIISQVGYMVMGLGIYTQL), 325–347 (GAIYYIAHHIIVKAALFLFAGAT), 368–390 (WLAWMFFISAISLAGIPPLSGFF), 405–427 (YIIAAVALAVGLLTLFSMMKIFI), and 448–470 (LLLPIVPLVALTIILGFAAEPIF).

This sequence belongs to the CPA3 antiporters (TC 2.A.63) subunit D family. As to quaternary structure, forms a heterooligomeric complex that consists of seven subunits: MrpA, MrpB, MrpC, MrpD, MrpE, MrpF and MrpG.

The protein resides in the cell membrane. Mnh complex is a Na(+)Li(+)/H(+) antiporter involved in Na(+) and/or Li(+) excretion and Na(+) resistance. Na(+)/H(+) antiport consumes a transmembrane electrical potential, and is thus inferred to be electrogenic. Does not transport K(+), Ca(2+) or Mg(2+). In terms of biological role, mrp complex is a Na(+)/H(+) antiporter involved in Na(+) excretion and Na(+) resistance. The protein is Na(+)/H(+) antiporter subunit D (mrpD) of Alkalihalophilus pseudofirmus (strain ATCC BAA-2126 / JCM 17055 / OF4) (Bacillus pseudofirmus).